Consider the following 79-residue polypeptide: Large ribosomal subunit protein uL22 (79 aa).

This sequence belongs to the universal ribosomal protein uL22 family. Part of the 50S ribosomal subunit.

In terms of biological role, this protein binds specifically to 23S rRNA; its binding is stimulated by other ribosomal proteins, e.g. L4, L17, and L20. It is important during the early stages of 50S assembly. It makes multiple contacts with different domains of the 23S rRNA in the assembled 50S subunit and ribosome. Its function is as follows. The globular domain of the protein is located near the polypeptide exit tunnel on the outside of the subunit, while an extended beta-hairpin is found that lines the wall of the exit tunnel in the center of the 70S ribosome. This chain is Large ribosomal subunit protein uL22 (rplV), found in Clover proliferation phytoplasma.